Reading from the N-terminus, the 529-residue chain is Ribonuclease Y (529 aa).

The chain crosses the membrane as a helical span at residues glycine 4–tyrosine 24. The 82-residue stretch at leucine 216–valine 297 folds into the KH domain. The region spanning alanine 342 to glycine 435 is the HD domain.

It belongs to the RNase Y family.

It is found in the cell membrane. Its function is as follows. Endoribonuclease that initiates mRNA decay. In Helicobacter pylori (strain J99 / ATCC 700824) (Campylobacter pylori J99), this protein is Ribonuclease Y.